The primary structure comprises 322 residues: Porphobilinogen deaminase (322 aa).

Cys252 bears the S-(dipyrrolylmethanemethyl)cysteine mark.

It belongs to the HMBS family. As to quaternary structure, monomer. Requires dipyrromethane as cofactor.

It catalyses the reaction 4 porphobilinogen + H2O = hydroxymethylbilane + 4 NH4(+). It functions in the pathway porphyrin-containing compound metabolism; protoporphyrin-IX biosynthesis; coproporphyrinogen-III from 5-aminolevulinate: step 2/4. Its function is as follows. Tetrapolymerization of the monopyrrole PBG into the hydroxymethylbilane pre-uroporphyrinogen in several discrete steps. The chain is Porphobilinogen deaminase from Caulobacter vibrioides (strain ATCC 19089 / CIP 103742 / CB 15) (Caulobacter crescentus).